Reading from the N-terminus, the 439-residue chain is Ribosomal protein uS12 methylthiotransferase RimO (439 aa).

Residues 7 to 119 (KQLCLISLGC…IDIMIAKKQN (113 aa)) form the MTTase N-terminal domain. 6 residues coordinate [4Fe-4S] cluster: C16, C50, C82, C151, C155, and C158. In terms of domain architecture, Radical SAM core spans 137–368 (TGSSVHAYVK…ALKHQNHSFK (232 aa)).

Belongs to the methylthiotransferase family. RimO subfamily. [4Fe-4S] cluster serves as cofactor.

The protein localises to the cytoplasm. It catalyses the reaction L-aspartate(89)-[ribosomal protein uS12]-hydrogen + (sulfur carrier)-SH + AH2 + 2 S-adenosyl-L-methionine = 3-methylsulfanyl-L-aspartate(89)-[ribosomal protein uS12]-hydrogen + (sulfur carrier)-H + 5'-deoxyadenosine + L-methionine + A + S-adenosyl-L-homocysteine + 2 H(+). Catalyzes the methylthiolation of an aspartic acid residue of ribosomal protein uS12. This is Ribosomal protein uS12 methylthiotransferase RimO from Helicobacter pylori (strain G27).